The sequence spans 84 residues: MYSHENHVNFQIVVGIPLLIKAVILCIQNILEVLLEDIGILKMESIFLHTNITIIPHSVLYVSLSYYIINPCTSASSNFDDSFS.

The next 2 membrane-spanning stretches (helical) occupy residues 7–27 (HVNFQIVVGIPLLIKAVILCI) and 52–72 (ITIIPHSVLYVSLSYYIINPC).

The protein localises to the membrane. This is an uncharacterized protein from Saccharomyces cerevisiae (strain ATCC 204508 / S288c) (Baker's yeast).